A 353-amino-acid polypeptide reads, in one-letter code: Probable peptidoglycan glycosyltransferase FtsW (353 aa).

8 helical membrane-spanning segments follow: residues 26 to 46 (IFYF…PMSF), 53 to 73 (LILI…KSVH), 115 to 135 (FWGF…LLAE), 137 to 157 (DLGT…LSGV), 162 to 182 (FFII…FEPY), 242 to 262 (IIGE…IFFI), 288 to 308 (IGLW…GILP), and 314 to 334 (LPLI…ICIL).

The protein belongs to the SEDS family. FtsW subfamily.

It is found in the cell inner membrane. It carries out the reaction [GlcNAc-(1-&gt;4)-Mur2Ac(oyl-L-Ala-gamma-D-Glu-L-Lys-D-Ala-D-Ala)](n)-di-trans,octa-cis-undecaprenyl diphosphate + beta-D-GlcNAc-(1-&gt;4)-Mur2Ac(oyl-L-Ala-gamma-D-Glu-L-Lys-D-Ala-D-Ala)-di-trans,octa-cis-undecaprenyl diphosphate = [GlcNAc-(1-&gt;4)-Mur2Ac(oyl-L-Ala-gamma-D-Glu-L-Lys-D-Ala-D-Ala)](n+1)-di-trans,octa-cis-undecaprenyl diphosphate + di-trans,octa-cis-undecaprenyl diphosphate + H(+). It functions in the pathway cell wall biogenesis; peptidoglycan biosynthesis. Functionally, peptidoglycan polymerase that is essential for cell division. The sequence is that of Probable peptidoglycan glycosyltransferase FtsW from Buchnera aphidicola subsp. Schizaphis graminum (strain Sg).